We begin with the raw amino-acid sequence, 175 residues long: RNA pyrophosphohydrolase (175 aa).

One can recognise a Nudix hydrolase domain in the interval 6-149 (GYRPNVGIVI…KRDVYRRVMK (144 aa)). A Nudix box motif is present at residues 38–59 (GGINPGETPEQAMYRELFEEVG).

The protein belongs to the Nudix hydrolase family. RppH subfamily. Requires a divalent metal cation as cofactor.

In terms of biological role, accelerates the degradation of transcripts by removing pyrophosphate from the 5'-end of triphosphorylated RNA, leading to a more labile monophosphorylated state that can stimulate subsequent ribonuclease cleavage. The chain is RNA pyrophosphohydrolase from Yersinia enterocolitica serotype O:8 / biotype 1B (strain NCTC 13174 / 8081).